The following is a 109-amino-acid chain: Large ribosomal subunit protein eL42 (109 aa).

Residues 23–53 (VSQYKKSKESTHAQGRRRYDMKQSGFGGQTK) are disordered. A compositionally biased stretch (basic and acidic residues) spans 28 to 43 (KSKESTHAQGRRRYDM).

This sequence belongs to the eukaryotic ribosomal protein eL42 family.

It is found in the cytoplasm. The protein is Large ribosomal subunit protein eL42 (RPL36A) of Tetrahymena thermophila (strain SB210).